A 371-amino-acid polypeptide reads, in one-letter code: N-acetyllactosaminide alpha-2,3-sialyltransferase (371 aa).

G255 contacts CMP-N-acetyl-beta-neuraminate. D258 functions as the Proton acceptor in the catalytic mechanism. CMP-N-acetyl-beta-neuraminate is bound by residues 278–282, 299–300, and 322–323; these read APHPR, IE, and SG. The active-site Proton donor is H280.

It belongs to the glycosyltransferase 52 family. As to quaternary structure, homodimer.

The protein resides in the cell outer membrane. The catalysed reaction is a beta-D-galactosyl-(1-&gt;4)-N-acetyl-beta-D-glucosaminyl derivative + CMP-N-acetyl-beta-neuraminate = an N-acetyl-alpha-neuraminyl-(2-&gt;3)-beta-D-galactosyl-(1-&gt;4)-N-acetyl-beta-D-glucosaminyl derivative + CMP + H(+). The protein operates within bacterial outer membrane biogenesis; lipooligosaccharide biosynthesis. In terms of biological role, catalyzes the transfer of sialic acid from the substrate CMP-N-acetylneuraminate to the terminal galactose residue of the lacto-N-neotetraose branch of surface lipooligosaccharide (LOS), forming an alpha-2,3-sialyl linkage. Thus, functions in the sialylation of LOS, which plays a role in the evasion of the host immune response by protecting N.meningitidis from complement-mediated serum killing and from phagocytic killing by neutrophils. The polypeptide is N-acetyllactosaminide alpha-2,3-sialyltransferase (Neisseria meningitidis serogroup A / serotype 4A (strain DSM 15465 / Z2491)).